The primary structure comprises 130 residues: Flagellar assembly factor FliW (130 aa).

This sequence belongs to the FliW family. Interacts with translational regulator CsrA and flagellin(s).

It localises to the cytoplasm. Functionally, acts as an anti-CsrA protein, binds CsrA and prevents it from repressing translation of its target genes, one of which is flagellin. Binds to flagellin and participates in the assembly of the flagellum. This chain is Flagellar assembly factor FliW, found in Borrelia duttonii (strain Ly).